A 752-amino-acid chain; its full sequence is Polyribonucleotide nucleotidyltransferase (752 aa).

Mg(2+)-binding residues include aspartate 542 and aspartate 548. The region spanning 608 to 667 is the KH domain; the sequence is PRITTIQIPVSKIGELIGPKGKNINALTEETGANISIEDDGTVFISAASGEAAEAAIEKI. Residues 679-748 form the S1 motif domain; that stretch reads GERFLGTVVK…NRGKISLVPV (70 aa).

Belongs to the polyribonucleotide nucleotidyltransferase family. Mg(2+) serves as cofactor.

Its subcellular location is the cytoplasm. The enzyme catalyses RNA(n+1) + phosphate = RNA(n) + a ribonucleoside 5'-diphosphate. Involved in mRNA degradation. Catalyzes the phosphorolysis of single-stranded polyribonucleotides processively in the 3'- to 5'-direction. This is Polyribonucleotide nucleotidyltransferase from Corynebacterium efficiens (strain DSM 44549 / YS-314 / AJ 12310 / JCM 11189 / NBRC 100395).